A 292-amino-acid polypeptide reads, in one-letter code: 4-diphosphocytidyl-2-C-methyl-D-erythritol kinase (292 aa).

The active site involves Lys20. 103–113 (PMGGGIGGGSS) is a binding site for ATP. The active site involves Asp145.

Belongs to the GHMP kinase family. IspE subfamily.

The catalysed reaction is 4-CDP-2-C-methyl-D-erythritol + ATP = 4-CDP-2-C-methyl-D-erythritol 2-phosphate + ADP + H(+). Its pathway is isoprenoid biosynthesis; isopentenyl diphosphate biosynthesis via DXP pathway; isopentenyl diphosphate from 1-deoxy-D-xylulose 5-phosphate: step 3/6. Functionally, catalyzes the phosphorylation of the position 2 hydroxy group of 4-diphosphocytidyl-2C-methyl-D-erythritol. The chain is 4-diphosphocytidyl-2-C-methyl-D-erythritol kinase from Cupriavidus metallidurans (strain ATCC 43123 / DSM 2839 / NBRC 102507 / CH34) (Ralstonia metallidurans).